The chain runs to 371 residues: MASVTLKNVCKAYGDVLISKNVDLEINEGEFVVFVGPSGCGKSTLLRCIAGLEDITSGDLYIGEERMNDVEPSKRGVGMVFQSYALYPHLNLYDNMSFGLKLAKADKKEIDKRVEQAAEILQLGHLLERLPKALSGGQRQRVAIGRTLVSQPKVFLLDEPLSNLDAALRVQMRAQITKLQRQLGCTMIYVTHDQVEAMTMADKIVVLDGGFVSQVGKPLELYHYPENRFVAGFIGSPKMNFMSVQIVDVESERVQVKLSNGVTFWVPVDGTTVNKGDRMSLGVRPEHLVSSAQGDAVIDGEVMIVEKLGNETQVYLNLESADADVIYRQPDTLDVDSGDRLEIGIPAHRCHLFHSDGRACKRLFNEKGVER.

Positions 4-234 constitute an ABC transporter domain; sequence VTLKNVCKAY…PENRFVAGFI (231 aa). 36–43 lines the ATP pocket; it reads GPSGCGKS.

Belongs to the ABC transporter superfamily. Maltooligosaccharide importer (TC 3.A.1.1.1) family. In terms of assembly, the complex is composed of two ATP-binding proteins (MalK), two transmembrane proteins (MalG and MalK) and a solute-binding protein (MalE).

The protein resides in the cell inner membrane. It carries out the reaction D-maltose(out) + ATP + H2O = D-maltose(in) + ADP + phosphate + H(+). In terms of biological role, part of the ABC transporter complex MalEFGK involved in maltose/maltodextrin import. Responsible for energy coupling to the transport system. The protein is Maltose/maltodextrin import ATP-binding protein MalK of Vibrio vulnificus (strain CMCP6).